The primary structure comprises 90 residues: Progonadoliberin-3 (90 aa).

Residues 1 to 23 (MEASSRVTVQVLLLALVVQVTLS) form the signal peptide. At Q24 the chain carries Pyrrolidone carboxylic acid. A Glycine amide modification is found at G33.

Belongs to the GnRH family.

The protein localises to the secreted. In terms of biological role, stimulates the secretion of gonadotropins. In Pagrus major (Red sea bream), this protein is Progonadoliberin-3 (gnrh3).